A 451-amino-acid polypeptide reads, in one-letter code: Trigger factor (451 aa).

The 86-residue stretch at 173–258 folds into the PPIase FKBP-type domain; that stretch reads GDRVTVDFVG…LKKVEWAHLP (86 aa).

It belongs to the FKBP-type PPIase family. Tig subfamily.

The protein resides in the cytoplasm. The catalysed reaction is [protein]-peptidylproline (omega=180) = [protein]-peptidylproline (omega=0). Functionally, involved in protein export. Acts as a chaperone by maintaining the newly synthesized protein in an open conformation. Functions as a peptidyl-prolyl cis-trans isomerase. The chain is Trigger factor from Cupriavidus taiwanensis (strain DSM 17343 / BCRC 17206 / CCUG 44338 / CIP 107171 / LMG 19424 / R1) (Ralstonia taiwanensis (strain LMG 19424)).